We begin with the raw amino-acid sequence, 260 residues long: MILDDLVAVTKIRLARHQRQQSLADLKQTVAKMPRNHKPDFLIRLKQPGLHVIAEVKKASPSKGTIVTDFPYLAIAKAYDQAGADAISVLTEPDYFNGHLHYLKEISQQVSVPTLRKDFTIDPYMIYEAKANGAVIILLIVAILTDQQLRDYRQLAEKLGMHAIVEAYTAAEVTRALQSGAKIIGINNRNLKDFRVDFTNSLKLRAMVPDNIPVVAESGIKTQEDVEKLAAAGFNAILIGETLMRSNQKKQLIAAFKERA.

It belongs to the TrpC family.

The enzyme catalyses 1-(2-carboxyphenylamino)-1-deoxy-D-ribulose 5-phosphate + H(+) = (1S,2R)-1-C-(indol-3-yl)glycerol 3-phosphate + CO2 + H2O. Its pathway is amino-acid biosynthesis; L-tryptophan biosynthesis; L-tryptophan from chorismate: step 4/5. The protein is Indole-3-glycerol phosphate synthase (trpC) of Lacticaseibacillus casei (Lactobacillus casei).